A 177-amino-acid polypeptide reads, in one-letter code: Dual-action ribosomal maturation protein DarP (177 aa).

Residues 1–26 (MKIVGDSEHFKQPYDSDEEYVSKTED) form a disordered region.

Belongs to the DarP family.

Its subcellular location is the cytoplasm. Member of a network of 50S ribosomal subunit biogenesis factors which assembles along the 30S-50S interface, preventing incorrect 23S rRNA structures from forming. Promotes peptidyl transferase center (PTC) maturation. The polypeptide is Dual-action ribosomal maturation protein DarP (Shewanella sp. (strain MR-4)).